A 396-amino-acid polypeptide reads, in one-letter code: Small ribosomal subunit protein uS9m (396 aa).

The interval 374–396 (PRVRERKKPGQEGARRKFTWKKR) is disordered.

Belongs to the universal ribosomal protein uS9 family. Component of the mitochondrial ribosome small subunit (28S) which comprises a 12S rRNA and about 30 distinct proteins.

It localises to the mitochondrion. The chain is Small ribosomal subunit protein uS9m (MRPS9) from Bos taurus (Bovine).